Consider the following 220-residue polypeptide: Fructose-6-phosphate aldolase 2 (220 aa).

The Schiff-base intermediate with substrate role is filled by lysine 85.

The protein belongs to the transaldolase family. Type 3A subfamily. In terms of assembly, homodecamer.

The protein localises to the cytoplasm. It catalyses the reaction beta-D-fructose 6-phosphate = dihydroxyacetone + D-glyceraldehyde 3-phosphate. Its function is as follows. Catalyzes the reversible formation of fructose 6-phosphate from dihydroxyacetone and D-glyceraldehyde 3-phosphate via an aldolization reaction. The protein is Fructose-6-phosphate aldolase 2 (fsaB) of Escherichia coli O6:H1 (strain CFT073 / ATCC 700928 / UPEC).